Reading from the N-terminus, the 230-residue chain is Chalcone--flavanone isomerase (230 aa).

3 residues coordinate substrate: T52, N117, and S194.

It belongs to the chalcone isomerase family.

It catalyses the reaction a chalcone = a flavanone.. It participates in secondary metabolite biosynthesis; flavonoid biosynthesis. Its function is as follows. Catalyzes the intramolecular cyclization of bicyclic chalcones into tricyclic (S)-flavanones. Responsible for the isomerization of 4,2',4',6'-tetrahydroxychalcone (also termed chalcone) into naringenin. In Camellia sinensis (Tea plant), this protein is Chalcone--flavanone isomerase (CHI).